A 591-amino-acid polypeptide reads, in one-letter code: Mono(ADP-ribosyl)transferase SpvB (591 aa).

The 204-residue stretch at 373-576 (PMMGGNSSRP…LRLSDDATAD (204 aa)) folds into the TR mART core domain. Active-site residues include arginine 471, serine 501, and glutamate 538.

This sequence belongs to the SpvB family.

It is found in the secreted. The enzyme catalyses L-arginyl-[protein] + NAD(+) = N(omega)-(ADP-D-ribosyl)-L-arginyl-[protein] + nicotinamide + H(+). In terms of biological role, mono-ADP-ribosylates eukaryotic muscle and non-muscle actin on 'Arg-177'. ADP-ribosylation prevents the polymerization of G-actin to F-actin, causing actin filament depolymerization, destruction of the cytoskeleton and cytotoxicity. Does not possess NAD(+)-glycohydrolase activity, unlike most mART enzymes. The chain is Mono(ADP-ribosyl)transferase SpvB (spvB) from Salmonella typhimurium (strain 14028s / SGSC 2262).